The primary structure comprises 586 residues: Phosphomethylpyrimidine synthase (586 aa).

The interval 1 to 58 (MKQSVSAEQIELKSSLPGSKKVYVDGPREGMKVPMREIEQSDTNGVPNPPIRVYDTSG) is disordered. Positions 22-39 (VYVDGPREGMKVPMREIE) are enriched in basic and acidic residues. Residues Asn193, Met222, Tyr251, His287, 307 to 309 (SRG), 348 to 351 (DGLR), and Glu387 each bind substrate. Position 391 (His391) interacts with Zn(2+). Tyr414 serves as a coordination point for substrate. His455 is a binding site for Zn(2+). Residues Cys535, Cys538, and Cys543 each contribute to the [4Fe-4S] cluster site.

The protein belongs to the ThiC family. It depends on [4Fe-4S] cluster as a cofactor.

It catalyses the reaction 5-amino-1-(5-phospho-beta-D-ribosyl)imidazole + S-adenosyl-L-methionine = 4-amino-2-methyl-5-(phosphooxymethyl)pyrimidine + CO + 5'-deoxyadenosine + formate + L-methionine + 3 H(+). Its pathway is cofactor biosynthesis; thiamine diphosphate biosynthesis. In terms of biological role, catalyzes the synthesis of the hydroxymethylpyrimidine phosphate (HMP-P) moiety of thiamine from aminoimidazole ribotide (AIR) in a radical S-adenosyl-L-methionine (SAM)-dependent reaction. The sequence is that of Phosphomethylpyrimidine synthase from Bacillus thuringiensis (strain Al Hakam).